The sequence spans 375 residues: Anhydro-N-acetylmuramic acid kinase (375 aa).

13–20 lines the ATP pocket; the sequence is GTSMDGVD.

Belongs to the anhydro-N-acetylmuramic acid kinase family.

It carries out the reaction 1,6-anhydro-N-acetyl-beta-muramate + ATP + H2O = N-acetyl-D-muramate 6-phosphate + ADP + H(+). The protein operates within amino-sugar metabolism; 1,6-anhydro-N-acetylmuramate degradation. It functions in the pathway cell wall biogenesis; peptidoglycan recycling. Functionally, catalyzes the specific phosphorylation of 1,6-anhydro-N-acetylmuramic acid (anhMurNAc) with the simultaneous cleavage of the 1,6-anhydro ring, generating MurNAc-6-P. Is required for the utilization of anhMurNAc either imported from the medium or derived from its own cell wall murein, and thus plays a role in cell wall recycling. The polypeptide is Anhydro-N-acetylmuramic acid kinase (Pelagibacter ubique (strain HTCC1062)).